A 192-amino-acid polypeptide reads, in one-letter code: Fe/S biogenesis protein NfuA (192 aa).

2 residues coordinate [4Fe-4S] cluster: cysteine 149 and cysteine 152.

This sequence belongs to the NfuA family. Homodimer. It depends on [4Fe-4S] cluster as a cofactor.

Involved in iron-sulfur cluster biogenesis. Binds a 4Fe-4S cluster, can transfer this cluster to apoproteins, and thereby intervenes in the maturation of Fe/S proteins. Could also act as a scaffold/chaperone for damaged Fe/S proteins. The sequence is that of Fe/S biogenesis protein NfuA from Shewanella baltica (strain OS223).